Here is a 464-residue protein sequence, read N- to C-terminus: Keratin, type I cytoskeletal 28 (464 aa).

Residues 1 to 85 (MSLQFSNGSR…GSEGGLLSGN (85 aa)) are head. A coil 1A region spans residues 86–121 (EKVTMQNLNDRLASYLDNVRALEEANAELERKIKGW). The IF rod domain maps to 86–401 (EKVTMQNLND…RLIDGDGNSC (316 aa)). The interval 122–143 (YEKYGPGSCRGLDHDYSRYHLT) is linker 1. Residues 144–235 (IEDLKNKIIS…KNHEEEMKAL (92 aa)) form a coil 1B region. Positions 236-258 (QCAAGGNVNVEMNAAPGVDLAVL) are linker 12. A coil 2 region spans residues 259 to 397 (LNNMRAEYEA…ETYCRLIDGD (139 aa)). Positions 398-464 (GNSCSKSKGF…NGKTEQRVPF (67 aa)) are tail. The interval 443–464 (IHSIEEKTSKMTNGKTEQRVPF) is disordered.

Belongs to the intermediate filament family. Heterotetramer of two type I and two type II keratins. Strongly expressed in skin and scalp, and weak expression observed in thymus. In the hair follicle, expressed in Henle layer, Huxley layer and in the irs cuticle. Expression extends from the bulb region up to the point of differentiation into the three layers. Also present in the medulla of beard hair (at protein level).

It localises to the cytoplasm. Its function is as follows. Essential for the proper assembly of types I and II keratin protein complexes and the formation of keratin intermediate filaments in the inner root sheath (irs). In Homo sapiens (Human), this protein is Keratin, type I cytoskeletal 28.